The sequence spans 715 residues: Eosinophil peroxidase (715 aa).

Positions 1-17 (MHLLPALAGVLATLVLA) are cleaved as a signal peptide. Positions 18–139 (QPCEGTDPAS…SGCALRDQAE (122 aa)) are excised as a propeptide. N-linked (GlcNAc...) asparagine glycans are attached at residues N52 and N113. A disulfide bond links C141 and C152. D232 lines the heme b pocket. The active-site Proton acceptor is H233. D234 is a binding site for Ca(2+). 2 disulfide bridges follow: C253–C263 and C257–C281. Ca(2+)-binding residues include T306, F308, D310, and S312. 2 N-linked (GlcNAc...) asparagine glycosylation sites follow: N327 and N363. C359 and C370 are joined by a disulfide. Heme b-binding residues include E380 and H474. Y488 carries the 3'-nitrotyrosine modification. 2 disulfides stabilise this stretch: C578/C635 and C676/C701. Residues N700 and N708 are each glycosylated (N-linked (GlcNAc...) asparagine).

The protein belongs to the peroxidase family. XPO subfamily. Tetramer of two light chains and two heavy chains. Ca(2+) serves as cofactor. It depends on heme b as a cofactor.

It localises to the cytoplasmic granule. The catalysed reaction is 2 a phenolic donor + H2O2 = 2 a phenolic radical donor + 2 H2O. Functionally, mediates tyrosine nitration of secondary granule proteins in mature resting eosinophils. Shows significant inhibitory activity towards Mycobacterium tuberculosis H37Rv by inducing bacterial fragmentation and lysis. The protein is Eosinophil peroxidase (EPX) of Homo sapiens (Human).